The following is a 110-amino-acid chain: Insulin (110 aa).

A signal peptide spans 1-24 (MALWMRLLPLLALLALWGPDPAAA). Disulfide bonds link Cys-31/Cys-96, Cys-43/Cys-109, and Cys-95/Cys-100. Positions 57–87 (EAEDLQVGQVELGGGPGAGSLQPLALEGSLQ) are cleaved as a propeptide — c peptide.

This sequence belongs to the insulin family. Heterodimer of a B chain and an A chain linked by two disulfide bonds.

It is found in the secreted. In terms of biological role, insulin decreases blood glucose concentration. It increases cell permeability to monosaccharides, amino acids and fatty acids. It accelerates glycolysis, the pentose phosphate cycle, and glycogen synthesis in liver. This chain is Insulin (INS), found in Gorilla gorilla gorilla (Western lowland gorilla).